We begin with the raw amino-acid sequence, 237 residues long: 2,3-bisphosphoglycerate-dependent phosphoglycerate mutase (237 aa).

Residues 10–17, 23–24, R62, 89–92, K100, 116–117, and 185–186 contribute to the substrate site; these read RHGESKWN, TG, ERHY, RR, and GN. The Tele-phosphohistidine intermediate role is filled by H11. E89 serves as the catalytic Proton donor/acceptor.

It belongs to the phosphoglycerate mutase family. BPG-dependent PGAM subfamily. Homodimer.

It catalyses the reaction (2R)-2-phosphoglycerate = (2R)-3-phosphoglycerate. It participates in carbohydrate degradation; glycolysis; pyruvate from D-glyceraldehyde 3-phosphate: step 3/5. Functionally, catalyzes the interconversion of 2-phosphoglycerate and 3-phosphoglycerate. The sequence is that of 2,3-bisphosphoglycerate-dependent phosphoglycerate mutase from Baumannia cicadellinicola subsp. Homalodisca coagulata.